Consider the following 311-residue polypeptide: Malate dehydrogenase (311 aa).

Residues 7–13 (GAAGGIG) and D34 contribute to the NAD(+) site. Positions 81 and 87 each coordinate substrate. Residues N94 and 117 to 119 (ITN) contribute to the NAD(+) site. Residues N119 and R153 each contribute to the substrate site. The active-site Proton acceptor is H177. M227 serves as a coordination point for NAD(+).

The protein belongs to the LDH/MDH superfamily. MDH type 1 family. As to quaternary structure, homodimer.

The enzyme catalyses (S)-malate + NAD(+) = oxaloacetate + NADH + H(+). Functionally, catalyzes the reversible oxidation of malate to oxaloacetate. This is Malate dehydrogenase from Aliivibrio fischeri (strain MJ11) (Vibrio fischeri).